The following is a 362-amino-acid chain: uncharacterized protein (362 aa).

Residues 13-33 (VLILSVGLNMLFLLLFYSAIF) traverse the membrane as a helical segment. In terms of domain architecture, LysM spans 314-357 (EEYVVQDGDSLWLIAKRFGIPMDKIIQKNGLNHHRLFPGKVLKL).

It belongs to the chlamydial CPn_0593/CT_474/TC_0759 family.

It is found in the membrane. This is an uncharacterized protein from Chlamydia pneumoniae (Chlamydophila pneumoniae).